We begin with the raw amino-acid sequence, 539 residues long: MDHEECKTQGNNYFKQSQYMDAIRCYTQAIELSNGTIAAYYGNRAAAYLAICTKSSLQDSIKDSLKAIELERSFIKGYTRASKAYIHLAQYDQAASIIVRGLVFDPRNNELLQEKNQIDSIQRTISSLTKEKALSNPSSSLNQIENVLSQSKYNTQLQVLKARVLIELKQYPQASNLMTTLLQEDSRNPEYLYVRGLSLYYQNNFPLALQHFQNSLTYDPDYSESRVALKRLRSIESKKKEGNEYFQSKNYQAAYDSFTEALSIDPKLETMNSQLYSNRAAALVHLNRISEAINDCTSAVTIDPNYGKAYIRRAQCQMKQENYEDAVRDYEKAQSLDPENGELQRNIKEAKIAHKKSLRKDYYKILGVSKEAGETEIKKAYRKLALQYHPDKNNQLPEEEKAQAEKMFKDIGEAYSVLSDEKKKRQYDMGQDENGMPFDADMGGVDINSVFSQFFNQGGMGGGMGGGGFGGMGGGGFGGMGGGGFSGMGGGGGFGGMPFGFDMGGGGGYGGMGGGFGGHSGHSHGGSRSRSSRGGNEYR.

6 TPR repeats span residues 3-36 (HEEC…SNGT), 75-108 (IKGY…DPRN), 189-222 (PEYL…DPDY), 235-268 (IESK…DPKL), 273-306 (SQLY…DPNY), and 307-340 (GKAY…DPEN). The J domain occupies 361–431 (DYYKILGVSK…KKKRQYDMGQ (71 aa)). Residues 512 to 539 (MGGGFGGHSGHSHGGSRSRSSRGGNEYR) form a disordered region. A compositionally biased stretch (basic residues) spans 521 to 531 (GHSHGGSRSRS).

The chain is DnaJ homolog subfamily C member 7 homolog (dnajc7) from Dictyostelium discoideum (Social amoeba).